Reading from the N-terminus, the 128-residue chain is Entry-fusion complex protein OPG094 (128 aa).

The Intravirion segment spans residues 1-30; sequence MENVPNVYFNPVFIEPTFKHSLLSVYKHRL. The chain crosses the membrane as a helical; Signal-anchor for type III membrane protein span at residues 31–51; that stretch reads IVLFEVFVVFILIYVFFRSEL. At 52–128 the chain is on the virion surface side; that stretch reads NMFFMPKRKI…PVSLNDVLRR (77 aa). Cys-75 and Cys-107 form a disulfide bridge.

It belongs to the orthopoxvirus OPG099 family. Interacts with OPG086. Component of the entry fusion complex (EFC) composed of OPG053, OPG076, OPG086, OPG094, OPG095, OPG099, OPG107, OPG143, OPG104J5, OPG147 and OPG155. Except for OPG095 and OPG053, each of the EFC proteins is required for assembly or stability of the complex. Post-translationally, most cysteines are linked by disulfide bonds. They are created by the viral disulfide bond formation pathway, a poxvirus-specific redox pathway that operates on the cytoplasmic side of the MV membranes. In terms of processing, unglycosylated because produced in viral factories instead of the classic ER -Golgi route.

It is found in the virion membrane. Its function is as follows. Component of the entry fusion complex (EFC), which consists of 11 proteins. During cell infection, this complex mediates entry of the virion core into the host cytoplasm by a two-step mechanism consisting of lipid mixing of the viral and cellular membranes and subsequent pore formation. This chain is Entry-fusion complex protein OPG094 (OPG099), found in Cynomys gunnisoni (Gunnison's prairie dog).